The primary structure comprises 171 residues: Shikimate kinase (171 aa).

14 to 19 (GAGKST) lines the ATP pocket. S18 lines the Mg(2+) pocket. Substrate contacts are provided by D36, R60, and G82. R120 serves as a coordination point for ATP. Residue R139 coordinates substrate. Residue Q156 coordinates ATP.

The protein belongs to the shikimate kinase family. In terms of assembly, monomer. Mg(2+) is required as a cofactor.

The protein resides in the cytoplasm. The catalysed reaction is shikimate + ATP = 3-phosphoshikimate + ADP + H(+). It participates in metabolic intermediate biosynthesis; chorismate biosynthesis; chorismate from D-erythrose 4-phosphate and phosphoenolpyruvate: step 5/7. Functionally, catalyzes the specific phosphorylation of the 3-hydroxyl group of shikimic acid using ATP as a cosubstrate. This chain is Shikimate kinase, found in Shewanella denitrificans (strain OS217 / ATCC BAA-1090 / DSM 15013).